A 390-amino-acid polypeptide reads, in one-letter code: Succinate--CoA ligase [ADP-forming] subunit beta (390 aa).

The ATP-grasp domain occupies 9–245 (KELLSRYGLP…KSQENEREVK (237 aa)). ATP contacts are provided by residues lysine 46, 53–55 (GRG), glutamate 100, tyrosine 103, and glutamate 108. Residues asparagine 200 and aspartate 214 each contribute to the Mg(2+) site. Residues asparagine 265 and 322-324 (GIV) contribute to the substrate site.

The protein belongs to the succinate/malate CoA ligase beta subunit family. Heterotetramer of two alpha and two beta subunits. Mg(2+) serves as cofactor.

It catalyses the reaction succinate + ATP + CoA = succinyl-CoA + ADP + phosphate. It carries out the reaction GTP + succinate + CoA = succinyl-CoA + GDP + phosphate. It functions in the pathway carbohydrate metabolism; tricarboxylic acid cycle; succinate from succinyl-CoA (ligase route): step 1/1. Succinyl-CoA synthetase functions in the citric acid cycle (TCA), coupling the hydrolysis of succinyl-CoA to the synthesis of either ATP or GTP and thus represents the only step of substrate-level phosphorylation in the TCA. The beta subunit provides nucleotide specificity of the enzyme and binds the substrate succinate, while the binding sites for coenzyme A and phosphate are found in the alpha subunit. The protein is Succinate--CoA ligase [ADP-forming] subunit beta of Chromobacterium violaceum (strain ATCC 12472 / DSM 30191 / JCM 1249 / CCUG 213 / NBRC 12614 / NCIMB 9131 / NCTC 9757 / MK).